Consider the following 378-residue polypeptide: Mating-type protein MAT-1 (378 aa).

Positions 60-117 form a DNA-binding region, alpha box; the sequence is KARKALNAFVGFRCYYITIPMFKPWPMKKLSNLIGLLWEADPNKSLWSLMAKPWSTIR.

It belongs to the MATALPHA1 family.

The protein localises to the nucleus. In terms of biological role, mating type proteins are sequence specific DNA-binding proteins that act as master switches in fungal differentiation by controlling gene expression in a cell type-specific fashion. Transcriptional activator that induces the transcription of alpha-specific genes. This chain is Mating-type protein MAT-1 (MAT1), found in Cochliobolus sativus (Common root rot and spot blotch fungus).